The primary structure comprises 320 residues: Cytochrome f (320 aa).

A signal peptide spans 1–35; the sequence is MQTRKTLSWIKEEITRSISVSLMIYIITGAYISNA. Positions 36, 56, 59, and 60 each coordinate heme. Residues 286 to 306 form a helical membrane-spanning segment; sequence VQGLLFFLASVILAQIFLVLK.

It belongs to the cytochrome f family. In terms of assembly, the 4 large subunits of the cytochrome b6-f complex are cytochrome b6, subunit IV (17 kDa polypeptide, petD), cytochrome f and the Rieske protein, while the 4 small subunits are PetG, PetL, PetM and PetN. The complex functions as a dimer. Heme is required as a cofactor.

The protein localises to the plastid. It localises to the chloroplast thylakoid membrane. Its function is as follows. Component of the cytochrome b6-f complex, which mediates electron transfer between photosystem II (PSII) and photosystem I (PSI), cyclic electron flow around PSI, and state transitions. The polypeptide is Cytochrome f (Populus alba (White poplar)).